The following is a 379-amino-acid chain: RING finger protein 215 (379 aa).

Disordered regions lie at residues 1–21 (MGSA…PPSP) and 44–63 (AADG…RSVR). Over 1–24 (MGSADRPALRSPSLPPPPPSPPSP) the chain is Cytoplasmic. A helical membrane pass occupies residues 25–45 (LLLLLPLLPLWLGLMGPGAAA). Residues 46–252 (DGSEPATGEG…GGAQAQEQKP (207 aa)) are Extracellular-facing. The N-linked (GlcNAc...) asparagine glycan is linked to Asn188. A helical membrane pass occupies residues 253–273 (LQQLWNAILLVAMLLCTGLVV). Residues 274 to 379 (QAQRQASRQN…NVLGNHYSDD (106 aa)) are Cytoplasmic-facing. An RING-type; atypical zinc finger spans residues 327–368 (CAVCLDYFCNKQWLRVLPCKHEFHRDCVDPWLMLQQTCPLCK).

It is found in the membrane. The sequence is that of RING finger protein 215 (Rnf215) from Mus musculus (Mouse).